Consider the following 189-residue polypeptide: Transcription factor FapR (189 aa).

The protein belongs to the FapR family.

Functionally, transcriptional factor involved in regulation of membrane lipid biosynthesis by repressing genes involved in fatty acid and phospholipid metabolism. The chain is Transcription factor FapR from Listeria innocua serovar 6a (strain ATCC BAA-680 / CLIP 11262).